Here is a 483-residue protein sequence, read N- to C-terminus: uncharacterized protein (483 aa).

In terms of domain architecture, TRAM spans 11-71 (RYRKGDIIEL…SRYLEARAIE (61 aa)). Positions 84, 90, 93, and 187 each coordinate [4Fe-4S] cluster. Glutamine 312, tyrosine 341, glutamate 362, and aspartate 412 together coordinate S-adenosyl-L-methionine. Residue cysteine 439 is the Nucleophile of the active site.

It belongs to the class I-like SAM-binding methyltransferase superfamily. RNA M5U methyltransferase family.

This is an uncharacterized protein from Chlorobaculum tepidum (strain ATCC 49652 / DSM 12025 / NBRC 103806 / TLS) (Chlorobium tepidum).